We begin with the raw amino-acid sequence, 339 residues long: 3,4-dihydroxy-2-butanone 4-phosphate synthase (339 aa).

The tract at residues 1 to 206 (MKFVSVEQAI…YRLKHESLIK (206 aa)) is DHBP synthase. Residues 27–28 (RE), Asp32, 139–143 (RTGHT), and Glu163 contribute to the D-ribulose 5-phosphate site. A Mg(2+)-binding site is contributed by Glu28. Mg(2+) is bound at residue His142. The tract at residues 207-339 (LEEKSQSVLA…GLNLKACNFN (133 aa)) is GTP cyclohydrolase II-like.

In the N-terminal section; belongs to the DHBP synthase family. It in the C-terminal section; belongs to the GTP cyclohydrolase II family. It depends on Mg(2+) as a cofactor. Mn(2+) serves as cofactor.

The catalysed reaction is D-ribulose 5-phosphate = (2S)-2-hydroxy-3-oxobutyl phosphate + formate + H(+). The protein operates within cofactor biosynthesis; riboflavin biosynthesis; 2-hydroxy-3-oxobutyl phosphate from D-ribulose 5-phosphate: step 1/1. Its function is as follows. Catalyzes the conversion of D-ribulose 5-phosphate to formate and 3,4-dihydroxy-2-butanone 4-phosphate. The protein is 3,4-dihydroxy-2-butanone 4-phosphate synthase (ribB) of Campylobacter jejuni subsp. jejuni serotype O:2 (strain ATCC 700819 / NCTC 11168).